The sequence spans 260 residues: Ribonuclease HII (260 aa).

One can recognise an RNase H type-2 domain in the interval 70 to 260 (QAIAGIDEVG…PIKSMLKEKN (191 aa)). Asp-76, Glu-77, and Asp-171 together coordinate a divalent metal cation.

The protein belongs to the RNase HII family. Requires Mn(2+) as cofactor. It depends on Mg(2+) as a cofactor.

It localises to the cytoplasm. The enzyme catalyses Endonucleolytic cleavage to 5'-phosphomonoester.. Endonuclease that specifically degrades the RNA of RNA-DNA hybrids. The protein is Ribonuclease HII of Streptococcus mutans serotype c (strain ATCC 700610 / UA159).